A 156-amino-acid chain; its full sequence is Ribosome maturation factor RimP (156 aa).

The protein belongs to the RimP family.

It localises to the cytoplasm. Required for maturation of 30S ribosomal subunits. The polypeptide is Ribosome maturation factor RimP (Dictyoglomus turgidum (strain DSM 6724 / Z-1310)).